A 206-amino-acid polypeptide reads, in one-letter code: Guanylate kinase (206 aa).

The Guanylate kinase-like domain maps to G6–D185. G13–S20 is a binding site for ATP.

It belongs to the guanylate kinase family.

It is found in the cytoplasm. The catalysed reaction is GMP + ATP = GDP + ADP. In terms of biological role, essential for recycling GMP and indirectly, cGMP. This Sulfurimonas denitrificans (strain ATCC 33889 / DSM 1251) (Thiomicrospira denitrificans (strain ATCC 33889 / DSM 1251)) protein is Guanylate kinase.